The sequence spans 388 residues: Leucine aminopeptidase 1 (388 aa).

Residues 1–19 form the signal peptide; it reads MKSLSLLALAAIAPPAAVA. Positions 20–88 are excised as a propeptide; that stretch reads AVVDHQVPFE…SVKSHERIQV (69 aa). A glycan (N-linked (GlcNAc...) asparagine) is linked at asparagine 180. Zn(2+)-binding residues include histidine 188, aspartate 207, glutamate 246, and aspartate 273. An intrachain disulfide couples cysteine 322 to cysteine 326. Histidine 355 provides a ligand contact to Zn(2+).

The protein belongs to the peptidase M28 family. M28E subfamily. Monomer. Requires Zn(2+) as cofactor.

Its subcellular location is the secreted. Extracellular aminopeptidase that allows assimilation of proteinaceous substrates. This is Leucine aminopeptidase 1 (LAP1) from Coccidioides posadasii (strain RMSCC 757 / Silveira) (Valley fever fungus).